Here is an 81-residue protein sequence, read N- to C-terminus: Toxin F-VIII (81 aa).

An N-terminal signal peptide occupies residues 1 to 21 (MKTLLLTLLVVTIVCLDLAST). 4 disulfide bridges follow: Cys-24-Cys-43, Cys-38-Cys-60, Cys-62-Cys-73, and Cys-74-Cys-79.

It belongs to the three-finger toxin family. Short-chain subfamily. Orphan group XI sub-subfamily. As to expression, expressed by the venom gland.

It localises to the secreted. Functionally, is cytotoxic against A549 cells (LC(50)=106 ug/ml). This chain is Toxin F-VIII, found in Dendroaspis angusticeps (Eastern green mamba).